Reading from the N-terminus, the 384-residue chain is Spermatogenesis-associated protein 32 (384 aa).

The disordered stretch occupies residues 23 to 60; that stretch reads RDDLSQHQIQEEQELEADMLEQKPQLQVDLDLDPDPDP. Phosphoserine is present on residues Ser-167 and Ser-170. Disordered regions lie at residues 211-232, 284-310, and 340-366; these read DAHSAPPTTSSQAPSPLLSSDL, VEEREPENHAETLPEKPREARAPLKSW, and LLQPPATSPLLQGSKEDSVPPGKEKEN. A compositionally biased stretch (low complexity) spans 214–231; sequence SAPPTTSSQAPSPLLSSD. The span at 353–366 shows a compositional bias: basic and acidic residues; sequence SKEDSVPPGKEKEN.

In terms of assembly, interacts with syntaxin-1 and ACTB. In terms of tissue distribution, detected in testis, and on the acrosomal cap of spermatids.

The sequence is that of Spermatogenesis-associated protein 32 (SPATA32) from Homo sapiens (Human).